The primary structure comprises 167 residues: 3-isopropylmalate dehydratase small subunit (167 aa).

It belongs to the LeuD family. LeuD type 2 subfamily. In terms of assembly, heterodimer of LeuC and LeuD.

It carries out the reaction (2R,3S)-3-isopropylmalate = (2S)-2-isopropylmalate. It participates in amino-acid biosynthesis; L-leucine biosynthesis; L-leucine from 3-methyl-2-oxobutanoate: step 2/4. Its function is as follows. Catalyzes the isomerization between 2-isopropylmalate and 3-isopropylmalate, via the formation of 2-isopropylmaleate. The sequence is that of 3-isopropylmalate dehydratase small subunit from Nitratidesulfovibrio vulgaris (strain ATCC 29579 / DSM 644 / CCUG 34227 / NCIMB 8303 / VKM B-1760 / Hildenborough) (Desulfovibrio vulgaris).